Consider the following 416-residue polypeptide: Serine hydroxymethyltransferase (416 aa).

Residues Leu-117 and 121-123 (GHL) contribute to the (6S)-5,6,7,8-tetrahydrofolate site. Residue Lys-226 is modified to N6-(pyridoxal phosphate)lysine. Glu-242 provides a ligand contact to (6S)-5,6,7,8-tetrahydrofolate.

It belongs to the SHMT family. Homodimer. Pyridoxal 5'-phosphate is required as a cofactor.

It localises to the cytoplasm. It carries out the reaction (6R)-5,10-methylene-5,6,7,8-tetrahydrofolate + glycine + H2O = (6S)-5,6,7,8-tetrahydrofolate + L-serine. It participates in one-carbon metabolism; tetrahydrofolate interconversion. The protein operates within amino-acid biosynthesis; glycine biosynthesis; glycine from L-serine: step 1/1. Its function is as follows. Catalyzes the reversible interconversion of serine and glycine with tetrahydrofolate (THF) serving as the one-carbon carrier. This reaction serves as the major source of one-carbon groups required for the biosynthesis of purines, thymidylate, methionine, and other important biomolecules. Also exhibits THF-independent aldolase activity toward beta-hydroxyamino acids, producing glycine and aldehydes, via a retro-aldol mechanism. The sequence is that of Serine hydroxymethyltransferase from Endomicrobium trichonymphae.